Reading from the N-terminus, the 98-residue chain is NADH-ubiquinone oxidoreductase chain 4L (98 aa).

The next 3 membrane-spanning stretches (helical) occupy residues 2-22, 29-49, and 61-81; these read PSIS…MLVF, SLLC…LFIM, and ILLL…LVMV.

This sequence belongs to the complex I subunit 4L family. As to quaternary structure, core subunit of respiratory chain NADH dehydrogenase (Complex I) which is composed of 45 different subunits.

It is found in the mitochondrion inner membrane. It carries out the reaction a ubiquinone + NADH + 5 H(+)(in) = a ubiquinol + NAD(+) + 4 H(+)(out). Functionally, core subunit of the mitochondrial membrane respiratory chain NADH dehydrogenase (Complex I) which catalyzes electron transfer from NADH through the respiratory chain, using ubiquinone as an electron acceptor. Part of the enzyme membrane arm which is embedded in the lipid bilayer and involved in proton translocation. The chain is NADH-ubiquinone oxidoreductase chain 4L (MT-ND4L) from Lepilemur sahamalazensis (Sahamalaza sportive lemur).